Here is a 451-residue protein sequence, read N- to C-terminus: Phosphoglucosamine mutase (451 aa).

S107 serves as the catalytic Phosphoserine intermediate. S107, D246, D248, and D250 together coordinate Mg(2+). A Phosphoserine modification is found at S107.

Belongs to the phosphohexose mutase family. It depends on Mg(2+) as a cofactor. Activated by phosphorylation.

The enzyme catalyses alpha-D-glucosamine 1-phosphate = D-glucosamine 6-phosphate. Functionally, catalyzes the conversion of glucosamine-6-phosphate to glucosamine-1-phosphate. In Burkholderia multivorans (strain ATCC 17616 / 249), this protein is Phosphoglucosamine mutase.